We begin with the raw amino-acid sequence, 315 residues long: Taste receptor type 2 member 129 (315 aa).

Over 1-9 (MDGIIQIIS) the chain is Extracellular. The helical transmembrane segment at 10 to 30 (AFIVIIEIIIGWFGNGFIVLV) threads the bilayer. Residues 31 to 46 (NCMHWIKRRRISTVNQ) lie on the Cytoplasmic side of the membrane. Residues 47 to 67 (ILTALAFSRIYLLLTVFTVIL) form a helical membrane-spanning segment. The Extracellular segment spans residues 68-101 (ASVQYSNILVTRREVKVIIFHLITSNHFSMWLAA). A helical transmembrane segment spans residues 102 to 122 (CLGLFYFLKIANFSNFIFVFL). Residues 123-128 (KKRVNK) are Cytoplasmic-facing. Residues 129 to 149 (VVSGTLLMSLVFLFLNTLLIN) form a helical membrane-spanning segment. Residues 150–185 (SYIDAQIDDYRGYLLYDFTSNITVSFYRVILVINNC) are Extracellular-facing. The N-linked (GlcNAc...) asparagine glycan is linked to N170. The chain crosses the membrane as a helical span at residues 186–206 (IFTSIPFALSQSTFLMLIFSL). Residues 207–233 (WRHYKKMQQHAQRCRDTLTNAHIKVLQ) lie on the Cytoplasmic side of the membrane. Residues 234–254 (TMIMYVLLSAIFFLFLSMQIW) traverse the membrane as a helical segment. The Extracellular segment spans residues 255–266 (RNKLMENILFIR). Residues 267-287 (FCETVAAVFPSGHSCVLIWGD) traverse the membrane as a helical segment. Topologically, residues 288–315 (TNLRQTFLSVLWWLKHRFTLWVPKLYCR) are cytoplasmic.

This sequence belongs to the G-protein coupled receptor T2R family.

The protein resides in the membrane. Putative taste receptor which may play a role in the perception of bitterness. The sequence is that of Taste receptor type 2 member 129 from Rattus norvegicus (Rat).